Here is a 135-residue protein sequence, read N- to C-terminus: Protein PsiE homolog (135 aa).

4 consecutive transmembrane segments (helical) span residues V20–L40, Y54–V74, H82–V102, and P107–A127.

The protein belongs to the PsiE family.

The protein localises to the cell inner membrane. The polypeptide is Protein PsiE homolog (Yersinia pseudotuberculosis serotype IB (strain PB1/+)).